The chain runs to 455 residues: Argininosuccinate synthase (455 aa).

Residues 17–25 and alanine 43 contribute to the ATP site; that span reads AFSGGLDTS. Tyrosine 99 serves as a coordination point for L-citrulline. Glycine 129 and threonine 131 together coordinate ATP. 3 residues coordinate L-aspartate: threonine 131, asparagine 135, and aspartate 136. An L-citrulline-binding site is contributed by asparagine 135. Aspartate 136 contacts ATP. The L-citrulline site is built by arginine 139 and serine 192. Aspartate 194 contacts ATP. Threonine 201, glutamate 203, and glutamate 280 together coordinate L-citrulline. The segment covering 434–448 has biased composition (polar residues); the sequence is TGLPQVDNNNLSSGR. The interval 434-455 is disordered; sequence TGLPQVDNNNLSSGRGLQDKRQ.

This sequence belongs to the argininosuccinate synthase family. Type 2 subfamily. Homotetramer.

Its subcellular location is the cytoplasm. The enzyme catalyses L-citrulline + L-aspartate + ATP = 2-(N(omega)-L-arginino)succinate + AMP + diphosphate + H(+). Its pathway is amino-acid biosynthesis; L-arginine biosynthesis; L-arginine from L-ornithine and carbamoyl phosphate: step 2/3. This chain is Argininosuccinate synthase (argG), found in Yersinia pestis.